The sequence spans 97 residues: Large ribosomal subunit protein bL28 (97 aa).

This sequence belongs to the bacterial ribosomal protein bL28 family.

The chain is Large ribosomal subunit protein bL28 from Rickettsia peacockii (strain Rustic).